The sequence spans 160 residues: Endoribonuclease YbeY (160 aa).

The Zn(2+) site is built by His-127, His-131, and His-137.

It belongs to the endoribonuclease YbeY family. Requires Zn(2+) as cofactor.

The protein resides in the cytoplasm. In terms of biological role, single strand-specific metallo-endoribonuclease involved in late-stage 70S ribosome quality control and in maturation of the 3' terminus of the 16S rRNA. In Synechococcus sp. (strain RCC307), this protein is Endoribonuclease YbeY.